Consider the following 201-residue polypeptide: Adenylyl-sulfate kinase (201 aa).

Residue 35–42 (GLSGSGKS) coordinates ATP. The active-site Phosphoserine intermediate is the serine 109.

It belongs to the APS kinase family.

It carries out the reaction adenosine 5'-phosphosulfate + ATP = 3'-phosphoadenylyl sulfate + ADP + H(+). It participates in sulfur metabolism; hydrogen sulfide biosynthesis; sulfite from sulfate: step 2/3. In terms of biological role, catalyzes the synthesis of activated sulfate. The polypeptide is Adenylyl-sulfate kinase (Klebsiella pneumoniae (strain 342)).